The chain runs to 122 residues: Small ribosomal subunit protein uS13 (122 aa).

The tract at residues 99-122 (RGQRTHTNARTRKGPAKAIAGKKK) is disordered.

This sequence belongs to the universal ribosomal protein uS13 family. In terms of assembly, part of the 30S ribosomal subunit. Forms a loose heterodimer with protein S19. Forms two bridges to the 50S subunit in the 70S ribosome.

Located at the top of the head of the 30S subunit, it contacts several helices of the 16S rRNA. In the 70S ribosome it contacts the 23S rRNA (bridge B1a) and protein L5 of the 50S subunit (bridge B1b), connecting the 2 subunits; these bridges are implicated in subunit movement. Contacts the tRNAs in the A and P-sites. The protein is Small ribosomal subunit protein uS13 of Rhizobium meliloti (strain 1021) (Ensifer meliloti).